The primary structure comprises 151 residues: Arginine repressor (151 aa).

This sequence belongs to the ArgR family.

The protein localises to the cytoplasm. It functions in the pathway amino-acid biosynthesis; L-arginine biosynthesis [regulation]. Its function is as follows. Regulates arginine biosynthesis genes. The chain is Arginine repressor from Enterococcus faecalis (strain ATCC 700802 / V583).